The sequence spans 72 residues: Large ribosomal subunit protein eL40 (72 aa).

Belongs to the eukaryotic ribosomal protein eL40 family.

The polypeptide is Large ribosomal subunit protein eL40 (Nicotiana tabacum (Common tobacco)).